Here is a 240-residue protein sequence, read N- to C-terminus: RxLR effector protein PexRD20 (240 aa).

The first 23 residues, 1–23 (MRCHYFVLLAVAAFLAGANVAVA), serve as a signal peptide directing secretion. Residues 43-58 (RALRSHTKATDHGEER) carry the RxLR-dEER motif.

It belongs to the RxLR effector family.

The protein localises to the secreted. It localises to the host cytoplasm. Its subcellular location is the host nucleus. It is found in the host nucleolus. Its function is as follows. Effector that enhances P.infestans colonization of Nicotiana benthamiana leaves. This chain is RxLR effector protein PexRD20, found in Phytophthora infestans (strain T30-4) (Potato late blight agent).